The chain runs to 319 residues: Olfactory receptor 8U3 (319 aa).

Topologically, residues 1-25 are extracellular; the sequence is MAEVNISYVSEFILKGITDRPELQA. N-linked (GlcNAc...) asparagine glycosylation is present at Asn5. The helical transmembrane segment at 26-46 threads the bilayer; sequence PCFVMFLTIYLVTVLGNLGLI. Residues 47–54 lie on the Cytoplasmic side of the membrane; that stretch reads VIIRVDSR. A helical transmembrane segment spans residues 55–75; sequence LHTPMYFFLSHLAFVDLCYSS. The Extracellular portion of the chain corresponds to 76–99; that stretch reads AITPKMMVNFVVERNTIPFHACAT. A disulfide bond links Cys97 and Cys189. The helical transmembrane segment at 100-120 threads the bilayer; that stretch reads QLGCFLTFMITECFLLASMAY. Over 121-133 the chain is Cytoplasmic; that stretch reads DRYVAICSPLHYS. The chain crosses the membrane as a helical span at residues 134 to 154; that stretch reads TLMSKRVCIQLVAVPYVYSFL. Residues 155-196 lie on the Extracellular side of the membrane; that stretch reads VALFHTIITFRLTYCGPNVINHFYCDDLPLLALSCSDTHMKE. Residues 197–217 traverse the membrane as a helical segment; that stretch reads ILIFAFAGFDMICSSSIVLTS. Residues 218–237 are Cytoplasmic-facing; sequence YLFIIAAILRIRSTQGRRKA. Residues 238-258 form a helical membrane-spanning segment; that stretch reads ISTCGSHMVAVTIFYGTLIFM. The Extracellular portion of the chain corresponds to 259-271; sequence YLQPKSNHSLDTD. N-linked (GlcNAc...) asparagine glycosylation is present at Asn265. Residues 272–292 form a helical membrane-spanning segment; that stretch reads KMASVFYTVVIPMLNPLIYSL. Residues 293 to 319 lie on the Cytoplasmic side of the membrane; that stretch reads RNKEVKDASKKALDKGYETLKILRLSK.

The protein belongs to the G-protein coupled receptor 1 family.

It localises to the cell membrane. Potential odorant receptor. The chain is Olfactory receptor 8U3 from Mus musculus (Mouse).